Here is a 309-residue protein sequence, read N- to C-terminus: MPRHCSAAGCCTRDTRETRNRGISFHRLPKKDNPRRGLWLANCQRLDPSGQGLWDPTSEYIYFCSKHFEENCFELVGISGYHRLKEGAVPTIFESFSKLRRTAKTKGHGYPPGLPDVSRLRRCRKRCSERQGPTTPFSPPPRADIICFPVEEASAPATLPASPAVRLDPGLNSPFSDLLGPLGAQADEAGCSTQPSPEQHPSPLEPQPASPSAYMLRLPPPAGAYIQNEHSYQVGSALLWKRRAEAALDALDKTQRQLQACKRREQRLRLRLTKLQQERAREKRAQADARQTLKDHVQDFAMQLSSSMA.

The segment at methionine 1–phenylalanine 93 adopts a THAP-type zinc-finger fold. Serine 162 bears the Phosphoserine mark. A disordered region spans residues serine 176 to serine 210. Positions glutamate 198–alanine 209 are enriched in pro residues. Position 210 is a phosphoserine (serine 210). An HCFC1-binding motif (HBM) motif is present at residues glutamate 229 to tyrosine 232.

Forms homodimers. Interacts with HDAC3 and nuclear hormone receptor corepressors. Interacts via HBM with HCFC1.

The protein resides in the nucleus. Its subcellular location is the chromosome. Chromatin-associated, histone tail-binding protein that represses transcription via recruitment of HDAC3 and nuclear hormone receptor corepressors. The sequence is that of THAP domain-containing protein 7 (Thap7) from Mus musculus (Mouse).